Reading from the N-terminus, the 388-residue chain is GTPase Obg (388 aa).

Positions 1 to 159 (MKFVDEAVIK…RELRLELLLL (159 aa)) constitute an Obg domain. The region spanning 160–333 (ADVGMLGLPN…LCYKLADFME (174 aa)) is the OBG-type G domain. Residues 166–173 (GLPNAGKS), 191–195 (FTTLI), 213–216 (DIPG), 283–286 (NKVD), and 314–316 (SAV) each bind GTP. Serine 173 and threonine 193 together coordinate Mg(2+). The segment at 359–380 (NQGEVITEDDDDWDDWDDEEDD) is disordered. Over residues 364 to 380 (ITEDDDDWDDWDDEEDD) the composition is skewed to acidic residues.

Belongs to the TRAFAC class OBG-HflX-like GTPase superfamily. OBG GTPase family. As to quaternary structure, monomer. Requires Mg(2+) as cofactor.

It is found in the cytoplasm. In terms of biological role, an essential GTPase which binds GTP, GDP and possibly (p)ppGpp with moderate affinity, with high nucleotide exchange rates and a fairly low GTP hydrolysis rate. Plays a role in control of the cell cycle, stress response, ribosome biogenesis and in those bacteria that undergo differentiation, in morphogenesis control. The sequence is that of GTPase Obg from Vibrio vulnificus (strain YJ016).